Reading from the N-terminus, the 300-residue chain is Ribonuclease HIII (300 aa).

The RNase H type-2 domain maps to 83–300 (IPIIGSDEVG…THKAQALLTK (218 aa)). A divalent metal cation is bound by residues Asp-89, Glu-90, and Asp-194.

The protein belongs to the RNase HII family. RnhC subfamily. Mn(2+) is required as a cofactor. It depends on Mg(2+) as a cofactor.

It is found in the cytoplasm. It carries out the reaction Endonucleolytic cleavage to 5'-phosphomonoester.. Endonuclease that specifically degrades the RNA of RNA-DNA hybrids. The sequence is that of Ribonuclease HIII from Streptococcus pyogenes serotype M4 (strain MGAS10750).